A 1248-amino-acid chain; its full sequence is ATP-dependent helicase/nuclease subunit A (1248 aa).

In terms of domain architecture, UvrD-like helicase ATP-binding spans 4–480 (TKWTKEQYAA…ILLFKNFRSR (477 aa)). Position 25–32 (25–32 (AAAGAGKT)) interacts with ATP. Residues 523–820 (ETVVGGAIEL…RLMSIHKSKG (298 aa)) enclose the UvrD-like helicase C-terminal domain.

This sequence belongs to the helicase family. AddA subfamily. Heterodimer of AddA and AddB/RexB. It depends on Mg(2+) as a cofactor.

The catalysed reaction is Couples ATP hydrolysis with the unwinding of duplex DNA by translocating in the 3'-5' direction.. The enzyme catalyses ATP + H2O = ADP + phosphate + H(+). Its function is as follows. The heterodimer acts as both an ATP-dependent DNA helicase and an ATP-dependent, dual-direction single-stranded exonuclease. Recognizes the chi site generating a DNA molecule suitable for the initiation of homologous recombination. The AddA nuclease domain is required for chi fragment generation; this subunit has the helicase and 3' -&gt; 5' nuclease activities. This chain is ATP-dependent helicase/nuclease subunit A, found in Ruminiclostridium cellulolyticum (strain ATCC 35319 / DSM 5812 / JCM 6584 / H10) (Clostridium cellulolyticum).